A 221-amino-acid polypeptide reads, in one-letter code: Toxin coregulated pilus biosynthesis protein P (221 aa).

Positions 5–109 (RVIYQFPDNL…VKLQGYRINI (105 aa)) form a DNA-binding region, ompR/PhoB-type. Residues 143–163 (VVPYLVFSALYVALLPVIWWS) form a helical membrane-spanning segment.

The protein resides in the cell membrane. Its function is as follows. Involved in TCP pilus biogenesis. The chain is Toxin coregulated pilus biosynthesis protein P (tcpP) from Vibrio cholerae serotype O1 (strain ATCC 39315 / El Tor Inaba N16961).